The chain runs to 225 residues: Small ribosomal subunit protein uS2 (225 aa).

It belongs to the universal ribosomal protein uS2 family.

This Metallosphaera sedula (strain ATCC 51363 / DSM 5348 / JCM 9185 / NBRC 15509 / TH2) protein is Small ribosomal subunit protein uS2.